The chain runs to 360 residues: Photosystem II protein D1 3 (360 aa).

The next 3 helical transmembrane spans lie at 29–46, 118–133, and 142–156; these read YVGW…AATI, HFLI…EWEL, and WICV…AATA. H118 provides a ligand contact to chlorophyll a. Residue Y126 coordinates pheophytin a. D170 and E189 together coordinate [CaMn4O5] cluster. A helical membrane pass occupies residues 197–218; sequence FHQLGVAGVFGGALFSAMHGSL. H198 is a chlorophyll a binding site. A quinone contacts are provided by residues H215 and 264–265; that span reads SF. Residue H215 participates in Fe cation binding. Residue H272 participates in Fe cation binding. The chain crosses the membrane as a helical span at residues 274–288; it reads FLAAWPVIGIWFTAL. [CaMn4O5] cluster contacts are provided by H332, E333, D342, and A344. The propeptide occupies 345–360; the sequence is SAESAPVAMIAPSING.

This sequence belongs to the reaction center PufL/M/PsbA/D family. PSII is composed of 1 copy each of membrane proteins PsbA, PsbB, PsbC, PsbD, PsbE, PsbF, PsbH, PsbI, PsbJ, PsbK, PsbL, PsbM, PsbT, PsbX, PsbY, PsbZ, Psb30/Ycf12, peripheral proteins PsbO, CyanoQ (PsbQ), PsbU, PsbV and a large number of cofactors. It forms dimeric complexes. Precursor protein interacts with Ycf48. The D1/D2 heterodimer binds P680, chlorophylls that are the primary electron donor of PSII, and subsequent electron acceptors. It shares a non-heme iron and each subunit binds pheophytin, quinone, additional chlorophylls, carotenoids and lipids. D1 provides most of the ligands for the Mn4-Ca-O5 cluster of the oxygen-evolving complex (OEC). There is also a Cl(-1) ion associated with D1 and D2, which is required for oxygen evolution. The PSII complex binds additional chlorophylls, carotenoids and specific lipids. serves as cofactor. C-terminally processed by CtpA; processing is essential to allow assembly of the oxygen-evolving complex and thus photosynthetic growth. In terms of processing, tyr-161 forms a radical intermediate that is referred to as redox-active TyrZ, YZ or Y-Z.

It localises to the cellular thylakoid membrane. It catalyses the reaction 2 a plastoquinone + 4 hnu + 2 H2O = 2 a plastoquinol + O2. Functionally, photosystem II (PSII) is a light-driven water:plastoquinone oxidoreductase that uses light energy to abstract electrons from H(2)O, generating O(2) and a proton gradient subsequently used for ATP formation. It consists of a core antenna complex that captures photons, and an electron transfer chain that converts photonic excitation into a charge separation. The D1/D2 (PsbA/PsbD) reaction center heterodimer binds P680, the primary electron donor of PSII as well as several subsequent electron acceptors. The polypeptide is Photosystem II protein D1 3 (Thermosynechococcus vestitus (strain NIES-2133 / IAM M-273 / BP-1)).